The primary structure comprises 587 residues: Aspartate--tRNA ligase (587 aa).

L-aspartate is bound at residue E174. The tract at residues Q198 to K201 is aspartate. An L-aspartate-binding site is contributed by R220. ATP contacts are provided by residues R220–E222 and Q229. H443 lines the L-aspartate pocket. E477 contributes to the ATP binding site. L-aspartate is bound at residue R484. G529–R532 provides a ligand contact to ATP.

Belongs to the class-II aminoacyl-tRNA synthetase family. Type 1 subfamily. In terms of assembly, homodimer.

It is found in the cytoplasm. The enzyme catalyses tRNA(Asp) + L-aspartate + ATP = L-aspartyl-tRNA(Asp) + AMP + diphosphate. Its function is as follows. Catalyzes the attachment of L-aspartate to tRNA(Asp) in a two-step reaction: L-aspartate is first activated by ATP to form Asp-AMP and then transferred to the acceptor end of tRNA(Asp). The sequence is that of Aspartate--tRNA ligase from Streptococcus pneumoniae (strain Hungary19A-6).